The chain runs to 292 residues: MVLTRQVLEEVENTFIELLRSKIGPLVKSHAGTNFCSYDDKANGVDLVTALDKQIESIIKENLTAKYPSFKFIGEETYVKGVTKITNGPTFIVDPIDGTTNFIHGYPYSCTSLGLAEMGKPVVGVVFNPHLNQLFHASKGNGAFLNDQEIKVSKRPLILQKSLIALEGGSERTEGSQGNFDKKMNTYKNLLSESGAFVHGFRSAGSAAMNICYVASGMLDAYWEGGCWAWDVCAGWCILEEAGGIMVGGNCGEWNIPLDRRCYLAIRGGCESMEQKRFAESFWPHVAGELEY.

Positions 75, 94, 96, 97, and 231 each coordinate Mg(2+). A substrate-binding site is contributed by Glu-75. Substrate-binding positions include 96–99 (IDGT) and Asp-231.

Belongs to the inositol monophosphatase superfamily. Requires Mg(2+) as cofactor.

It catalyses the reaction a myo-inositol phosphate + H2O = myo-inositol + phosphate. Its pathway is polyol metabolism; myo-inositol biosynthesis; myo-inositol from D-glucose 6-phosphate: step 2/2. With respect to regulation, inhibited by Li(+) and Na(+). Functionally, responsible for the provision of inositol required for synthesis of phosphatidylinositol and polyphosphoinositides and involved in the inositol cycle of calcium signaling. The protein is Inositol monophosphatase 2 (INM2) of Saccharomyces cerevisiae (strain ATCC 204508 / S288c) (Baker's yeast).